Reading from the N-terminus, the 1697-residue chain is SAC3 family protein B (1697 aa).

4 disordered regions span residues 54-134 (PPAS…QPGG), 167-280 (QRPN…SRSN), 306-413 (EATR…EQAR), and 491-512 (ESER…VDGD). Residues 120-134 (QNPSPSSGQPYQPGG) are compositionally biased toward low complexity. Basic and acidic residues predominate over residues 178 to 192 (DGSRNFLKDHGEHSR). A compositionally biased stretch (polar residues) spans 193-202 (ATSPPATSHI). Basic and acidic residues predominate over residues 215 to 227 (RSQDSKRKSRSDI). 3 stretches are compositionally biased toward polar residues: residues 233 to 243 (MGFSRRNQSPV), 257 to 280 (PLSS…SRSN), and 335 to 380 (RFST…SPAT). In terms of domain architecture, PCI spans 625–813 (NIEQMNKTSV…KCSKLVHMKK (189 aa)).

This sequence belongs to the SAC3 family. As to quaternary structure, interacts with SAC3A, EER5 and CML19. Interacts with UCH1 and UCH2.

It localises to the nucleus. In terms of biological role, component of the TREX-2 complex (transcription and export complex 2), a muliprotein complex that functions in docking export-competent ribonucleoprotein particles (mRNPs) to the nuclear entrance of the nuclear pore complex (nuclear basket). TREX-2 participates in mRNA export and accurate chromatin positioning in the nucleus by tethering genes to the nuclear periphery. The protein is SAC3 family protein B of Arabidopsis thaliana (Mouse-ear cress).